The primary structure comprises 311 residues: Olfactory receptor 4S2 (311 aa).

The Extracellular portion of the chain corresponds to 1-23 (MEKINNVTEFIFWGLSQSPEIEK). Asparagine 6 carries N-linked (GlcNAc...) asparagine glycosylation. The helical transmembrane segment at 24–47 (VCFVVFSFFYIIILLGNLLIMLTV) threads the bilayer. Topologically, residues 48-55 (CLSNLFKS) are cytoplasmic. A helical membrane pass occupies residues 56-77 (PMYFFLSFLSFVDICYSSVTAP). The Extracellular portion of the chain corresponds to 78 to 98 (KMIVDLLAKDKTISYVGCMLQ). Cysteine 95 and cysteine 187 are joined by a disulfide. A helical membrane pass occupies residues 99–118 (LFGVHFFGCTEIFILTVMAY). At 119–137 (DRYVAICKPLHYMTIMNRE) the chain is on the cytoplasmic side. Residues 138–156 (TCNKMLLGTWVGGFLHSII) traverse the membrane as a helical segment. Residues 157–193 (QVALVVQLPFCGPNEIDHYFCDVHPVLKLACTETYIV) are Extracellular-facing. Residues 194–217 (GVVVTANSGTIALGSFVILLISYS) form a helical membrane-spanning segment. The Cytoplasmic portion of the chain corresponds to 218–233 (IILVSLRKQSAEGRRK). A helical transmembrane segment spans residues 234-256 (ALSTCGSHIAMVVIFFGPCTFMY). The Extracellular segment spans residues 257 to 267 (MRPDTTFSEDK). Residues 268 to 287 (MVAVFYTIITPMLNPLIYTL) traverse the membrane as a helical segment. Topologically, residues 288–311 (RNAEVKNAMKKLWGRNVFLEAKGK) are cytoplasmic.

This sequence belongs to the G-protein coupled receptor 1 family.

It localises to the cell membrane. In terms of biological role, odorant receptor. This Homo sapiens (Human) protein is Olfactory receptor 4S2 (OR4S2).